Reading from the N-terminus, the 479-residue chain is MGKGQSKIKNGGSGKPAKAGKPKKGNKNDETTPTSTPTPTPTPTQQNLDNSAQQQQQQQQTTTAAVSLDNKEQQQQQNIPAPATQTPITQTGTPTIEESQKNTDNNNINGASNEASSSPDSPNGSGNGNDDEDEGPEEVIFSKNKQSATKDDFELLNVIGKGSFGKVMQVKKKGEDKIFAMKVLRKDAIIARKQVNHTKSEKTILQCISHPFIVNLHYAFQTKDKLYMVLDFVNGGELFFHLKREGRFSEPRVKIYAAEIVSALDHLHKQDIVYRDLKPENILLDSEGHICITDFGLSKKIETTDGTFTFCGTPEYLAPEVLNGHGHGCAVDWWSLGTLLYEMLTGLPPFYSQNVSTMYQKILNGELKIPTYISPEAKSLLEGLLTREVDKRLGTKGGGEVKQHPWFKNIDWEKLDRKEVEVHFKPKVKSGTDISQIDPVFTQERPMDSLVETSALGDAMGKDTSFEGFTYVADSILKD.

Positions 1-136 (MGKGQSKIKN…NGNDDEDEGP (136 aa)) are disordered. 2 stretches are compositionally biased toward low complexity: residues 52–65 (AQQQ…TTAA) and 79–96 (IPAP…TPTI). A compositionally biased stretch (polar residues) spans 102 to 115 (NTDNNNINGASNEA). Residues 153-407 (FELLNVIGKG…GGEVKQHPWF (255 aa)) form the Protein kinase domain. ATP is bound by residues 159 to 167 (IGKGSFGKV) and lysine 182. Aspartate 276 acts as the Proton acceptor in catalysis. Threonine 309 carries the phosphothreonine; by autocatalysis modification. The AGC-kinase C-terminal domain occupies 408 to 479 (KNIDWEKLDR…TYVADSILKD (72 aa)). Phosphothreonine is present on threonine 470.

It belongs to the protein kinase superfamily. AGC Ser/Thr protein kinase family. S6 kinase subfamily. In terms of processing, seems to be myristoylated.

It is found in the cytoplasm. It localises to the cell membrane. It carries out the reaction L-seryl-[protein] + ATP = O-phospho-L-seryl-[protein] + ADP + H(+). The enzyme catalyses L-threonyl-[protein] + ATP = O-phospho-L-threonyl-[protein] + ADP + H(+). Required for morphogenesis during multicellular development. Phosphorylates talB, gefN, gefS, PI4P 5-kinase and gacQ. This is Protein kinase 2 (pkgB) from Dictyostelium discoideum (Social amoeba).